Here is a 275-residue protein sequence, read N- to C-terminus: 4-diphosphocytidyl-2-C-methyl-D-erythritol kinase (275 aa).

K14 is a catalytic residue. 98 to 108 (PMGAGLGGGSS) lines the ATP pocket. Residue D140 is part of the active site.

Belongs to the GHMP kinase family. IspE subfamily.

The catalysed reaction is 4-CDP-2-C-methyl-D-erythritol + ATP = 4-CDP-2-C-methyl-D-erythritol 2-phosphate + ADP + H(+). It functions in the pathway isoprenoid biosynthesis; isopentenyl diphosphate biosynthesis via DXP pathway; isopentenyl diphosphate from 1-deoxy-D-xylulose 5-phosphate: step 3/6. Its function is as follows. Catalyzes the phosphorylation of the position 2 hydroxy group of 4-diphosphocytidyl-2C-methyl-D-erythritol. The chain is 4-diphosphocytidyl-2-C-methyl-D-erythritol kinase from Francisella tularensis subsp. holarctica (strain FTNF002-00 / FTA).